The following is a 161-amino-acid chain: Monooxygenase AgnL5 (161 aa).

Belongs to the avfA family.

The protein operates within secondary metabolite biosynthesis. Functionally, monooxygenase; part of the gene cluster that mediates the biosynthesis of agnestins, dihydroxy-xanthone metabolites. The pathway begins with the assembly and cyclization of atrochrysone thioester by the non-reducing polyketide synthase Agnpks1. The atrochrysone carboxyl ACP thioesterase AgnL7 then breaks the thioester bond and releases the atrochrysone carboxylic acid as the first enzyme-free intermediate. The decarboxylase AgnL1 then catalyzes the concerted decarboxylation-elimination required to convert atochrysone carboxylic acid into emodin anthrone, which is further oxidized to emodin by the anthrone oxygenase AgnL2. Emodin then undergoes reduction catalyzed by the oxidoreductase AgnL4 to yield the dihydroquinone tautomer which is the substrate for reduction by the short chain dehydrogenase AgnL6 reduction to produce hydroxyketone, followed by AgnL8 dehydration and likely spontaneous autoxidation to chrysophanol. Baeyer-Villiger oxidation by the oxidase AgnL3 leads to monodictyphenone via cleavage of the C-10/C-10a bond of chrysophanol. Alternative cleavage at the C-4a/C-10 bond of chrysophanol also leads to the formation some cephalone F. Further conversion to agnestins A and B, requires reduction to dihydro-monodictyphenone, oxidation to agnestin C probably via an epoxide, and rearrangement to either agnestin A or agnestin B directly, although agnestin A or agnestin B can also interconvert. Within the cluster, AgnR1 is the only unassigned oxidoreductase present which could be involved in this conversion. However, AgnR1 seems not to be involved in this step, and thus genes involved in the proposed oxidation/reduction may be located elsewhere on the genome. Further agnestin A derivatives are probably formed by spontaneous decarboxylations, dehydrations and methanolysis reactions. The chain is Monooxygenase AgnL5 from Paecilomyces divaricatus (Penicillium divaricatum).